Here is a 290-residue protein sequence, read N- to C-terminus: Agmatinase (290 aa).

Positions 112, 135, 137, 139, 216, and 218 each coordinate Mn(2+).

Belongs to the arginase family. Agmatinase subfamily. Mn(2+) serves as cofactor.

It catalyses the reaction agmatine + H2O = urea + putrescine. The protein operates within amine and polyamine biosynthesis; putrescine biosynthesis via agmatine pathway; putrescine from agmatine: step 1/1. In terms of biological role, catalyzes the formation of putrescine from agmatine. This is Agmatinase (speB) from Bacillus subtilis (strain 168).